We begin with the raw amino-acid sequence, 103 residues long: uncharacterized protein (103 aa).

A compositionally biased stretch (basic residues) spans 1–10; sequence MVVKKSKPKN. Disordered regions lie at residues 1–38 and 77–103; these read MVVK…KGKK and AVFS…NEKK.

This is an uncharacterized protein from Schizosaccharomyces pombe (strain 972 / ATCC 24843) (Fission yeast).